The primary structure comprises 109 residues: Probable glutaredoxin slr1562 (109 aa).

The Glutaredoxin domain occupies 11-109 (LSGRQADGIK…PLLATPPNPA (99 aa)). A disulfide bridge links Cys31 with Cys34.

The protein belongs to the glutaredoxin family.

Its function is as follows. Has a glutathione-disulfide oxidoreductase activity in the presence of NADPH and glutathione reductase. Reduces low molecular weight disulfides and proteins. The sequence is that of Probable glutaredoxin slr1562 from Synechocystis sp. (strain ATCC 27184 / PCC 6803 / Kazusa).